The chain runs to 318 residues: tRNA U34 carboxymethyltransferase (318 aa).

Residues Lys85, Trp99, Lys104, Gly124, 175-176 (LD), Met190, Tyr194, and Arg311 each bind carboxy-S-adenosyl-L-methionine.

This sequence belongs to the class I-like SAM-binding methyltransferase superfamily. CmoB family. As to quaternary structure, homotetramer.

It catalyses the reaction carboxy-S-adenosyl-L-methionine + 5-hydroxyuridine(34) in tRNA = 5-carboxymethoxyuridine(34) in tRNA + S-adenosyl-L-homocysteine + H(+). In terms of biological role, catalyzes carboxymethyl transfer from carboxy-S-adenosyl-L-methionine (Cx-SAM) to 5-hydroxyuridine (ho5U) to form 5-carboxymethoxyuridine (cmo5U) at position 34 in tRNAs. The polypeptide is tRNA U34 carboxymethyltransferase (Ruthia magnifica subsp. Calyptogena magnifica).